The primary structure comprises 182 residues: Lipid A acyltransferase PagP (182 aa).

The first 21 residues, 1–21, serve as a signal peptide directing secretion; sequence MTQYFRSLAFFLLPVPATAMA. C22 carries N-palmitoyl cysteine lipidation. Residue C22 is the site of S-diacylglycerol cysteine attachment. Residues H55, D98, and S99 contribute to the active site.

This sequence belongs to the lipid A palmitoyltransferase family. As to quaternary structure, homodimer.

It localises to the cell outer membrane. It carries out the reaction a lipid A + a 1,2-diacyl-sn-glycero-3-phosphocholine = a hepta-acyl lipid A + a 2-acyl-sn-glycero-3-phosphocholine. It catalyses the reaction a lipid IVA + a 1,2-diacyl-sn-glycero-3-phosphocholine = a lipid IVB + a 2-acyl-sn-glycero-3-phosphocholine. The catalysed reaction is a lipid IIA + a 1,2-diacyl-sn-glycero-3-phosphocholine = a lipid IIB + a 2-acyl-sn-glycero-3-phosphocholine. In terms of biological role, transfers a fatty acid residue from the sn-1 position of a phospholipid to the N-linked hydroxyfatty acid chain on the proximal unit of lipid A or its precursors. The sequence is that of Lipid A acyltransferase PagP from Bordetella pertussis (strain CS).